The sequence spans 334 residues: Ketol-acid reductoisomerase (NADP(+)) (334 aa).

Residues 1–181 (MTTVYYDQDV…GATRAGVIET (181 aa)) form the KARI N-terminal Rossmann domain. NADP(+) is bound by residues 25–28 (YGSQ), R48, S52, and 82–85 (DEIQ). The active site involves H107. Position 133 (G133) interacts with NADP(+). One can recognise a KARI C-terminal knotted domain in the interval 182 to 327 (TFKEETETDL…RELREMMPFI (146 aa)). Residues D190, E194, E226, and E230 each contribute to the Mg(2+) site. S251 contributes to the substrate binding site.

Belongs to the ketol-acid reductoisomerase family. Requires Mg(2+) as cofactor.

It catalyses the reaction (2R)-2,3-dihydroxy-3-methylbutanoate + NADP(+) = (2S)-2-acetolactate + NADPH + H(+). The enzyme catalyses (2R,3R)-2,3-dihydroxy-3-methylpentanoate + NADP(+) = (S)-2-ethyl-2-hydroxy-3-oxobutanoate + NADPH + H(+). It functions in the pathway amino-acid biosynthesis; L-isoleucine biosynthesis; L-isoleucine from 2-oxobutanoate: step 2/4. The protein operates within amino-acid biosynthesis; L-valine biosynthesis; L-valine from pyruvate: step 2/4. Its function is as follows. Involved in the biosynthesis of branched-chain amino acids (BCAA). Catalyzes an alkyl-migration followed by a ketol-acid reduction of (S)-2-acetolactate (S2AL) to yield (R)-2,3-dihydroxy-isovalerate. In the isomerase reaction, S2AL is rearranged via a Mg-dependent methyl migration to produce 3-hydroxy-3-methyl-2-ketobutyrate (HMKB). In the reductase reaction, this 2-ketoacid undergoes a metal-dependent reduction by NADPH to yield (R)-2,3-dihydroxy-isovalerate. The sequence is that of Ketol-acid reductoisomerase (NADP(+)) from Staphylococcus aureus (strain MSSA476).